A 294-amino-acid chain; its full sequence is UDP-3-O-acyl-N-acetylglucosamine deacetylase (294 aa).

Zn(2+) contacts are provided by His-75, His-232, and Asp-236. Catalysis depends on His-259, which acts as the Proton donor.

It belongs to the LpxC family. The cofactor is Zn(2+).

It catalyses the reaction a UDP-3-O-[(3R)-3-hydroxyacyl]-N-acetyl-alpha-D-glucosamine + H2O = a UDP-3-O-[(3R)-3-hydroxyacyl]-alpha-D-glucosamine + acetate. The protein operates within glycolipid biosynthesis; lipid IV(A) biosynthesis; lipid IV(A) from (3R)-3-hydroxytetradecanoyl-[acyl-carrier-protein] and UDP-N-acetyl-alpha-D-glucosamine: step 2/6. Its function is as follows. Catalyzes the hydrolysis of UDP-3-O-myristoyl-N-acetylglucosamine to form UDP-3-O-myristoylglucosamine and acetate, the committed step in lipid A biosynthesis. This chain is UDP-3-O-acyl-N-acetylglucosamine deacetylase, found in Campylobacter concisus (strain 13826).